A 299-amino-acid chain; its full sequence is NAD kinase (299 aa).

Residue D71 is the Proton acceptor of the active site. NAD(+) is bound by residues 71 to 72 (DG), 145 to 146 (ND), R173, D175, 186 to 191 (TAYSLS), A210, and Q248.

This sequence belongs to the NAD kinase family. A divalent metal cation is required as a cofactor.

The protein localises to the cytoplasm. The catalysed reaction is NAD(+) + ATP = ADP + NADP(+) + H(+). Its function is as follows. Involved in the regulation of the intracellular balance of NAD and NADP, and is a key enzyme in the biosynthesis of NADP. Catalyzes specifically the phosphorylation on 2'-hydroxyl of the adenosine moiety of NAD to yield NADP. This is NAD kinase from Bordetella bronchiseptica (strain ATCC BAA-588 / NCTC 13252 / RB50) (Alcaligenes bronchisepticus).